Here is a 1047-residue protein sequence, read N- to C-terminus: Isoleucine--tRNA ligase (1047 aa).

The 'HIGH' region motif lies at 52-62; the sequence is PTANGMPGAHH. The 'KMSKS' region motif lies at 600-604; the sequence is KMSKH. Lys-603 is an ATP binding site.

Belongs to the class-I aminoacyl-tRNA synthetase family. IleS type 2 subfamily. Monomer. Zn(2+) is required as a cofactor.

It is found in the cytoplasm. The enzyme catalyses tRNA(Ile) + L-isoleucine + ATP = L-isoleucyl-tRNA(Ile) + AMP + diphosphate. Its function is as follows. Catalyzes the attachment of isoleucine to tRNA(Ile). As IleRS can inadvertently accommodate and process structurally similar amino acids such as valine, to avoid such errors it has two additional distinct tRNA(Ile)-dependent editing activities. One activity is designated as 'pretransfer' editing and involves the hydrolysis of activated Val-AMP. The other activity is designated 'posttransfer' editing and involves deacylation of mischarged Val-tRNA(Ile). The sequence is that of Isoleucine--tRNA ligase from Streptomyces avermitilis (strain ATCC 31267 / DSM 46492 / JCM 5070 / NBRC 14893 / NCIMB 12804 / NRRL 8165 / MA-4680).